The chain runs to 216 residues: Serine acetyltransferase (216 aa).

The protein belongs to the transferase hexapeptide repeat family.

Its subcellular location is the cytoplasm. The enzyme catalyses L-serine + acetyl-CoA = O-acetyl-L-serine + CoA. Its pathway is amino-acid biosynthesis; L-cysteine biosynthesis; L-cysteine from L-serine: step 1/2. The sequence is that of Serine acetyltransferase (cysE) from Staphylococcus xylosus.